The chain runs to 148 residues: MAMASDFYLRYYVGHKGKFGHEFLEFEFRPDGKLRYANNSNYKNDVMIRKEAYVHKSVMEELKRIIDDSEITKEDDALWPPPDRVGRQELEIVIGDEHISFTTSKIGSLIDVNQSKDPEGLRVFYYLVQDLKCLVFSLIGLHFKIKPI.

A2 carries the N-acetylalanine modification.

This sequence belongs to the mago nashi family. Component of the pre-catalytic, catalytic and post-catalytic spliceosome complexes. Heterodimer with RBM8A. Core component of the mRNA splicing-dependent exon junction complex (EJC); the core complex contains CASC3, EIF4A3, MAGOH or MAGOHB, and RBM8A.

The protein localises to the nucleus. Its function is as follows. Required for pre-mRNA splicing as component of the spliceosome. Plays a redundant role with MAGOH in the exon junction complex and in the nonsense-mediated decay (NMD) pathway. In Bos taurus (Bovine), this protein is Protein mago nashi homolog 2 (MAGOHB).